Reading from the N-terminus, the 322-residue chain is 4-hydroxy-3-methylbut-2-enyl diphosphate reductase (322 aa).

Cys15 contributes to the [4Fe-4S] cluster binding site. Residues His44 and His77 each contribute to the (2E)-4-hydroxy-3-methylbut-2-enyl diphosphate site. Residues His44 and His77 each coordinate dimethylallyl diphosphate. Isopentenyl diphosphate-binding residues include His44 and His77. Cys99 is a [4Fe-4S] cluster binding site. His127 contacts (2E)-4-hydroxy-3-methylbut-2-enyl diphosphate. His127 provides a ligand contact to dimethylallyl diphosphate. His127 serves as a coordination point for isopentenyl diphosphate. Glu129 (proton donor) is an active-site residue. Residue Thr168 participates in (2E)-4-hydroxy-3-methylbut-2-enyl diphosphate binding. Cys198 contributes to the [4Fe-4S] cluster binding site. Ser226, Ser227, Asn228, and Ser270 together coordinate (2E)-4-hydroxy-3-methylbut-2-enyl diphosphate. Residues Ser226, Ser227, Asn228, and Ser270 each coordinate dimethylallyl diphosphate. Ser226, Ser227, Asn228, and Ser270 together coordinate isopentenyl diphosphate.

It belongs to the IspH family. Requires [4Fe-4S] cluster as cofactor.

It catalyses the reaction isopentenyl diphosphate + 2 oxidized [2Fe-2S]-[ferredoxin] + H2O = (2E)-4-hydroxy-3-methylbut-2-enyl diphosphate + 2 reduced [2Fe-2S]-[ferredoxin] + 2 H(+). The catalysed reaction is dimethylallyl diphosphate + 2 oxidized [2Fe-2S]-[ferredoxin] + H2O = (2E)-4-hydroxy-3-methylbut-2-enyl diphosphate + 2 reduced [2Fe-2S]-[ferredoxin] + 2 H(+). It participates in isoprenoid biosynthesis; dimethylallyl diphosphate biosynthesis; dimethylallyl diphosphate from (2E)-4-hydroxy-3-methylbutenyl diphosphate: step 1/1. The protein operates within isoprenoid biosynthesis; isopentenyl diphosphate biosynthesis via DXP pathway; isopentenyl diphosphate from 1-deoxy-D-xylulose 5-phosphate: step 6/6. In terms of biological role, catalyzes the conversion of 1-hydroxy-2-methyl-2-(E)-butenyl 4-diphosphate (HMBPP) into a mixture of isopentenyl diphosphate (IPP) and dimethylallyl diphosphate (DMAPP). Acts in the terminal step of the DOXP/MEP pathway for isoprenoid precursor biosynthesis. This is 4-hydroxy-3-methylbut-2-enyl diphosphate reductase from Neisseria meningitidis serogroup C (strain 053442).